The sequence spans 260 residues: Indole-3-glycerol phosphate synthase (260 aa).

The protein belongs to the TrpC family.

It catalyses the reaction 1-(2-carboxyphenylamino)-1-deoxy-D-ribulose 5-phosphate + H(+) = (1S,2R)-1-C-(indol-3-yl)glycerol 3-phosphate + CO2 + H2O. It functions in the pathway amino-acid biosynthesis; L-tryptophan biosynthesis; L-tryptophan from chorismate: step 4/5. The protein is Indole-3-glycerol phosphate synthase of Acetivibrio thermocellus (strain ATCC 27405 / DSM 1237 / JCM 9322 / NBRC 103400 / NCIMB 10682 / NRRL B-4536 / VPI 7372) (Clostridium thermocellum).